Here is a 62-residue protein sequence, read N- to C-terminus: uncharacterized protein (62 aa).

A coiled-coil region spans residues 28–61 (KIESTHPEIAKKLKEAAEKYREVEEILKKAVDMV).

This is an uncharacterized protein from Archaeoglobus fulgidus (strain ATCC 49558 / DSM 4304 / JCM 9628 / NBRC 100126 / VC-16).